A 358-amino-acid chain; its full sequence is Phospho-N-acetylmuramoyl-pentapeptide-transferase (358 aa).

Helical transmembrane passes span 28 to 48 (WALA…IAWL), 72 to 92 (TMGG…WADL), 96 to 116 (YIWL…LDDY), 133 to 153 (FLWQ…LPAY), 164 to 184 (GLTP…MVGS), 196 to 216 (GLAI…IYVA), 233 to 253 (VGEV…FLWF), 260 to 280 (VFMG…LAVL), 285 to 305 (LLLL…ILQV), and 335 to 355 (KIII…LSVL).

The protein belongs to the glycosyltransferase 4 family. MraY subfamily. It depends on Mg(2+) as a cofactor.

The protein resides in the cell inner membrane. The catalysed reaction is UDP-N-acetyl-alpha-D-muramoyl-L-alanyl-gamma-D-glutamyl-meso-2,6-diaminopimeloyl-D-alanyl-D-alanine + di-trans,octa-cis-undecaprenyl phosphate = di-trans,octa-cis-undecaprenyl diphospho-N-acetyl-alpha-D-muramoyl-L-alanyl-D-glutamyl-meso-2,6-diaminopimeloyl-D-alanyl-D-alanine + UMP. Its pathway is cell wall biogenesis; peptidoglycan biosynthesis. Catalyzes the initial step of the lipid cycle reactions in the biosynthesis of the cell wall peptidoglycan: transfers peptidoglycan precursor phospho-MurNAc-pentapeptide from UDP-MurNAc-pentapeptide onto the lipid carrier undecaprenyl phosphate, yielding undecaprenyl-pyrophosphoryl-MurNAc-pentapeptide, known as lipid I. The chain is Phospho-N-acetylmuramoyl-pentapeptide-transferase from Nitratidesulfovibrio vulgaris (strain ATCC 29579 / DSM 644 / CCUG 34227 / NCIMB 8303 / VKM B-1760 / Hildenborough) (Desulfovibrio vulgaris).